The chain runs to 280 residues: Bifunctional protein FolD (280 aa).

NADP(+)-binding positions include 164-166 (GRS), serine 189, and valine 230.

The protein belongs to the tetrahydrofolate dehydrogenase/cyclohydrolase family. In terms of assembly, homodimer.

It carries out the reaction (6R)-5,10-methylene-5,6,7,8-tetrahydrofolate + NADP(+) = (6R)-5,10-methenyltetrahydrofolate + NADPH. It catalyses the reaction (6R)-5,10-methenyltetrahydrofolate + H2O = (6R)-10-formyltetrahydrofolate + H(+). Its pathway is one-carbon metabolism; tetrahydrofolate interconversion. Functionally, catalyzes the oxidation of 5,10-methylenetetrahydrofolate to 5,10-methenyltetrahydrofolate and then the hydrolysis of 5,10-methenyltetrahydrofolate to 10-formyltetrahydrofolate. The sequence is that of Bifunctional protein FolD from Geotalea uraniireducens (strain Rf4) (Geobacter uraniireducens).